We begin with the raw amino-acid sequence, 311 residues long: 3-dehydro-scyllo-inosose hydrolase (311 aa).

Zn(2+)-binding residues include Glu-35, His-37, Asp-46, His-117, and Glu-173.

It belongs to the creatininase superfamily. In terms of assembly, homotrimer. Zn(2+) serves as cofactor.

It catalyses the reaction 3-dehydro-scyllo-inosose + H2O = 5-dehydro-L-gluconate + H(+). Its pathway is polyol metabolism; myo-inositol metabolism. Functionally, catalyzes the ring-opening hydrolysis of 3-dehydro-scyllo-inosose (diketo-inositol) to 5-dehydro-L-gluconate, and thus probably functions in a myo-inositol degradation pathway together with IolG, IolM and IolO. The polypeptide is 3-dehydro-scyllo-inosose hydrolase (Thermotoga maritima (strain ATCC 43589 / DSM 3109 / JCM 10099 / NBRC 100826 / MSB8)).